Reading from the N-terminus, the 403-residue chain is MAAFLKMSVSVNFFRPFTRFLVPFTLHRKRNNLTILQRYMSSKIPAVTYPKNESTPPSEELELDKWKTTMKSSVQEECVSTISSSKDEDPLAATREFIEMWRLLGREVPEHITEEELKTLMECVSNTAKKKYLKYLYTKEKVKKARQIKKEMKAAAREEAKNIKLLETTEEDKQKNFLFLRLWDRNMDIAMGWKGAQAMQFGQPLVFDMAYENYMKRKELQNTVSQLLESEGWNRRNVDPFHIYFCNLKIDGALHRELVKRYQEKWDKLLLTSTEKSHVDLFPKDSIIYLTADSPNVMTTFRHDKVYVIGSFVDKSMQPGTSLAKAKRLNLATECLPLDKYLQWEIGNKNLTLDQMIRILLCLKNNGNWQEALQFVPKRKHTGFLEISQHSQEFINRLKKAKT.

A mitochondrion-targeting transit peptide spans 1–39 (MAAFLKMSVSVNFFRPFTRFLVPFTLHRKRNNLTILQRY). Ser-84 carries the post-translational modification Phosphoserine. The stretch at 138–169 (TKEKVKKARQIKKEMKAAAREEAKNIKLLETT) forms a coiled coil. Residues 191–383 (MGWKGAQAMQ…QFVPKRKHTG (193 aa)) form the SAM-dependent MTase TRM10-type domain.

This sequence belongs to the class IV-like SAM-binding methyltransferase superfamily. TRM10 family. As to quaternary structure, component of mitochondrial ribonuclease P, a complex composed of TRMT10C/MRPP1, HSD17B10/MRPP2 and PRORP/MRPP3. Interacts with HSD17B10/MRPP2; forming the MRPP1-MRPP2 subcomplex of the mitochondrial ribonuclease P complex. Interacts with GRSF1.

It is found in the mitochondrion matrix. It localises to the mitochondrion nucleoid. The enzyme catalyses adenosine(9) in tRNA + S-adenosyl-L-methionine = N(1)-methyladenosine(9) in tRNA + S-adenosyl-L-homocysteine + H(+). It carries out the reaction guanosine(9) in tRNA + S-adenosyl-L-methionine = N(1)-methylguanosine(9) in tRNA + S-adenosyl-L-homocysteine + H(+). It catalyses the reaction an adenosine in mRNA + S-adenosyl-L-methionine = an N(1)-methyladenosine in mRNA + S-adenosyl-L-homocysteine + H(+). Functionally, mitochondrial tRNA N(1)-methyltransferase involved in mitochondrial tRNA maturation. Component of mitochondrial ribonuclease P, a complex composed of TRMT10C/MRPP1, HSD17B10/MRPP2 and PRORP/MRPP3, which cleaves tRNA molecules in their 5'-ends. Together with HSD17B10/MRPP2, forms a subcomplex of the mitochondrial ribonuclease P, named MRPP1-MRPP2 subcomplex, which displays functions that are independent of the ribonuclease P activity. The MRPP1-MRPP2 subcomplex catalyzes the formation of N(1)-methylguanine and N(1)-methyladenine at position 9 (m1G9 and m1A9, respectively) in tRNAs; TRMT10C/MRPP1 acting as the catalytic N(1)-methyltransferase subunit. The MRPP1-MRPP2 subcomplex also acts as a tRNA maturation platform: following 5'-end cleavage by the mitochondrial ribonuclease P complex, the MRPP1-MRPP2 subcomplex enhances the efficiency of 3'-processing catalyzed by ELAC2, retains the tRNA product after ELAC2 processing and presents the nascent tRNA to the mitochondrial CCA tRNA nucleotidyltransferase TRNT1 enzyme. In addition to tRNA N(1)-methyltransferase activity, TRMT10C/MRPP1 also acts as a mRNA N(1)-methyltransferase by mediating methylation of adenosine residues at the N(1) position of MT-ND5 mRNA. Associates with mitochondrial DNA complexes at the nucleoids to initiate RNA processing and ribosome assembly. This Homo sapiens (Human) protein is tRNA methyltransferase 10 homolog C.